Consider the following 205-residue polypeptide: Probable NAD(P)H dehydrogenase (quinone) FQR1-like 1 (205 aa).

Residues 5–192 (VYIVYYSMYG…GQAFHQGKYI (188 aa)) form the Flavodoxin-like domain. FMN-binding positions include 11-15 (SMYGH), 112-165 (IFYS…SPYG), and His136. Residue Tyr13 coordinates NAD(+).

This sequence belongs to the WrbA family. The cofactor is FMN.

It is found in the cell membrane. It carries out the reaction a quinone + NADH + H(+) = a quinol + NAD(+). The enzyme catalyses a quinone + NADPH + H(+) = a quinol + NADP(+). In terms of biological role, catalyzes the transfer of electrons from NADH and NADPH to reduce quinone to the hydroquinone state. This Arabidopsis thaliana (Mouse-ear cress) protein is Probable NAD(P)H dehydrogenase (quinone) FQR1-like 1.